Reading from the N-terminus, the 415-residue chain is Homoserine O-succinyltransferase (415 aa).

In terms of domain architecture, AB hydrolase-1 spans 69 to 383; it reads NAVLVCHALN…PHGHDAFLLD (315 aa). Ser175 acts as the Nucleophile in catalysis. Residue Arg245 coordinates substrate. Residues Asp344 and His377 contribute to the active site. Asp378 is a substrate binding site.

The protein belongs to the AB hydrolase superfamily. MetX family. Homodimer.

The protein resides in the cytoplasm. It carries out the reaction L-homoserine + succinyl-CoA = O-succinyl-L-homoserine + CoA. It participates in amino-acid biosynthesis; L-methionine biosynthesis via de novo pathway; O-succinyl-L-homoserine from L-homoserine: step 1/1. Its function is as follows. Transfers a succinyl group from succinyl-CoA to L-homoserine, forming succinyl-L-homoserine. The polypeptide is Homoserine O-succinyltransferase (Bordetella pertussis (strain Tohama I / ATCC BAA-589 / NCTC 13251)).